The primary structure comprises 445 residues: GTPase Der (445 aa).

EngA-type G domains lie at 3–167 (PVIA…YAGQ) and 180–353 (IKIA…AAAM). Residues 9–16 (GRPNVGKS), 56–60 (DTGGF), 119–122 (NKAE), 186–193 (GRPNVGKS), 233–237 (DTAGL), and 298–301 (NKWD) contribute to the GTP site. Positions 354–438 (AKLPTPKLTR…PLRIEFRSSN (85 aa)) constitute a KH-like domain.

It belongs to the TRAFAC class TrmE-Era-EngA-EngB-Septin-like GTPase superfamily. EngA (Der) GTPase family. As to quaternary structure, associates with the 50S ribosomal subunit.

Its function is as follows. GTPase that plays an essential role in the late steps of ribosome biogenesis. This Burkholderia ambifaria (strain MC40-6) protein is GTPase Der.